The chain runs to 174 residues: Isomerase prhC (174 aa).

This sequence belongs to the trt14 isomerase family. As to quaternary structure, homodimer.

It participates in secondary metabolite biosynthesis; terpenoid biosynthesis. Isomerase; part of the gene cluster that mediates the biosynthesis of paraherquonin, a meroterpenoid with a unique, highly congested hexacyclic molecular architecture. The first step of the pathway is the synthesis of 3,5-dimethylorsellinic acid (DMOA) by the polyketide synthase prhL. Synthesis of DMOA is followed by farnesylation by the prenyltransferase prhE, methylesterification by the methyl-transferase prhM, epoxidation of the prenyl chain by the flavin-dependent monooxygenase prhF, and cyclization of the farnesyl moiety by the terpene cyclase prhH, to yield the tetracyclic intermediate, protoaustinoid A. The short chain dehydrogenase prhI then oxidizes the C-3 alcohol group of the terpene cyclase product to transform protoaustinoid A into protoaustinoid B. The FAD-binding monooxygenase prhJ catalyzes the oxidation of protoaustinoid B into preaustinoid A which is further oxidized into preaustinoid A1 by FAD-binding monooxygenase phrK. Finally, prhA leads to berkeleydione via the berkeleyone B intermediate. PrhA is a multifunctional dioxygenase that first desaturates at C5-C6 to form berkeleyone B, followed by rearrangement of the A/B-ring to form the cycloheptadiene moiety in berkeleydione. Berkeleydione serves as the key intermediate for the biosynthesis of paraherquonin as well as many other meroterpenoids. The cytochrome P450 monooxygenases prhB, prhD, and prhN, as well as the isomerase prhC, are probably involved in the late stage of paraherquonin biosynthesis, after the production of berkeleydione. Especially prhC might be a multifunctional enzyme that catalyzes the D-ring expansion via intramolecular methoxy rearrangement, as well as the hydrolysis of the expanded D-ring. In Penicillium brasilianum, this protein is Isomerase prhC.